The sequence spans 438 residues: Citrate synthase (438 aa).

Catalysis depends on residues His-306 and Asp-364.

The protein belongs to the citrate synthase family.

The enzyme catalyses oxaloacetate + acetyl-CoA + H2O = citrate + CoA + H(+). The protein operates within carbohydrate metabolism; tricarboxylic acid cycle; isocitrate from oxaloacetate: step 1/2. This Bartonella quintana (strain Toulouse) (Rochalimaea quintana) protein is Citrate synthase (gltA).